The primary structure comprises 426 residues: mRNA cap guanine-N(7) methyltransferase (426 aa).

One can recognise an mRNA cap 0 methyltransferase domain in the interval 138-421 (SPIIKLRNFN…FYTTFAFRKV (284 aa)). 147 to 148 (NN) is an mRNA binding site. Residues Lys151, Ala169, Asp191, Asp220, Gln246, and Tyr251 each contribute to the S-adenosyl-L-methionine site.

The protein belongs to the class I-like SAM-binding methyltransferase superfamily. mRNA cap 0 methyltransferase family.

Its subcellular location is the nucleus. The enzyme catalyses a 5'-end (5'-triphosphoguanosine)-ribonucleoside in mRNA + S-adenosyl-L-methionine = a 5'-end (N(7)-methyl 5'-triphosphoguanosine)-ribonucleoside in mRNA + S-adenosyl-L-homocysteine. Responsible for methylating the 5'-cap structure of mRNAs. In Kluyveromyces lactis (strain ATCC 8585 / CBS 2359 / DSM 70799 / NBRC 1267 / NRRL Y-1140 / WM37) (Yeast), this protein is mRNA cap guanine-N(7) methyltransferase (ABD1).